The following is a 636-amino-acid chain: Threonine--tRNA ligase (636 aa).

Positions 1–61 constitute a TGS domain; sequence MLKITLKDGS…NENCEVEILS (61 aa). The tract at residues 244 to 534 is catalytic; that stretch reads EHRKLGKELD…LIEHYEGKFP (291 aa). Cysteine 335, histidine 386, and histidine 511 together coordinate Zn(2+).

The protein belongs to the class-II aminoacyl-tRNA synthetase family. Homodimer. Requires Zn(2+) as cofactor.

The protein localises to the cytoplasm. The enzyme catalyses tRNA(Thr) + L-threonine + ATP = L-threonyl-tRNA(Thr) + AMP + diphosphate + H(+). Its function is as follows. Catalyzes the attachment of threonine to tRNA(Thr) in a two-step reaction: L-threonine is first activated by ATP to form Thr-AMP and then transferred to the acceptor end of tRNA(Thr). Also edits incorrectly charged L-seryl-tRNA(Thr). The protein is Threonine--tRNA ligase of Natranaerobius thermophilus (strain ATCC BAA-1301 / DSM 18059 / JW/NM-WN-LF).